The sequence spans 100 residues: Small ubiquitin-related modifier 1 (100 aa).

The 78-residue stretch at 19 to 96 (EYIKLKVIGQ…IEVYQEQTGG (78 aa)) folds into the Ubiquitin-like domain. Glycine 96 participates in a covalent cross-link: Glycyl lysine isopeptide (Gly-Lys) (interchain with K-? in acceptor proteins). Residues 97-100 (CRND) constitute a propeptide that is removed on maturation.

This sequence belongs to the ubiquitin family. SUMO subfamily. As to quaternary structure, interacts with sae2, ube2i, ranbp2, pias1 and pias2. Covalently attached to a number of proteins. Post-translationally, cleavage of precursor form by a sentrin-specific protease is necessary for function.

It localises to the nucleus membrane. Its subcellular location is the nucleus speckle. The protein localises to the cytoplasm. It is found in the nucleus. The protein resides in the PML body. It localises to the cell membrane. Functionally, ubiquitin-like protein that can be covalently attached to proteins as a monomer or a lysine-linked polymer. Covalent attachment via an isopeptide bond to its substrates requires prior activation by the E1 complex sae1-sae2 and linkage to the E2 enzyme ube2i. This post-translational modification on lysine residues of proteins plays a crucial role in a number of cellular processes such as nuclear transport, DNA replication and repair, mitosis and signal transduction. Polymeric sumo1 chains are also susceptible to polyubiquitination which functions as a signal for proteasomal degradation of modified proteins. The chain is Small ubiquitin-related modifier 1 (sumo1) from Danio rerio (Zebrafish).